A 323-amino-acid polypeptide reads, in one-letter code: tRNA dimethylallyltransferase (323 aa).

12–19 (GPTAAGKT) is a binding site for ATP. 14–19 (TAAGKT) is a binding site for substrate. Interaction with substrate tRNA regions lie at residues 37–40 (DSAL) and 161–165 (QRLIR).

The protein belongs to the IPP transferase family. In terms of assembly, monomer. Mg(2+) serves as cofactor.

It catalyses the reaction adenosine(37) in tRNA + dimethylallyl diphosphate = N(6)-dimethylallyladenosine(37) in tRNA + diphosphate. Catalyzes the transfer of a dimethylallyl group onto the adenine at position 37 in tRNAs that read codons beginning with uridine, leading to the formation of N6-(dimethylallyl)adenosine (i(6)A). This is tRNA dimethylallyltransferase from Pseudomonas savastanoi pv. phaseolicola (strain 1448A / Race 6) (Pseudomonas syringae pv. phaseolicola (strain 1448A / Race 6)).